The primary structure comprises 561 residues: Mercuric reductase (561 aa).

Positions 2–65 (THLKITGMTC…AVAGLGYKAT (64 aa)) constitute an HMA domain. The a metal cation site is built by cysteine 11 and cysteine 14. The FAD site is built by alanine 110, glycine 130, and threonine 135. A disulfide bridge links cysteine 136 with cysteine 141. FAD is bound by residues lysine 145, alanine 211, aspartate 403, and valine 411. 2 residues coordinate Hg(2+): cysteine 558 and cysteine 559.

This sequence belongs to the class-I pyridine nucleotide-disulfide oxidoreductase family. As to quaternary structure, homodimer. The cofactor is FAD.

The catalysed reaction is Hg + NADP(+) + H(+) = Hg(2+) + NADPH. Resistance to Hg(2+) in bacteria appears to be governed by a specialized system which includes mercuric reductase. MerA protein is responsible for volatilizing mercury as Hg(0). Plays a pivotal role in mercury resistance under thiol-depleted conditions and cell protection. Protects cells under thiol-depleted conditions. In Pseudomonas aeruginosa, this protein is Mercuric reductase (merA).